The sequence spans 652 residues: Putative glycine--tRNA ligase (652 aa).

Positions 119–145 are disordered; it reads GDKEARGQNSNDQPEESDDKKKRKKKV. Glutamate 221 lines the glycine pocket. Residues 253–255 and 264–265 each bind ATP; these read RNE and RV. Residue glutamate 272 participates in glycine binding. ATP is bound at residue 380–381; the sequence is EC. 499-501 is a glycine binding site; sequence EPS. ATP is bound at residue arginine 506.

Belongs to the class-II aminoacyl-tRNA synthetase family. Homodimer.

It is found in the cytoplasm. It catalyses the reaction tRNA(Gly) + glycine + ATP = glycyl-tRNA(Gly) + AMP + diphosphate. The catalysed reaction is 2 ATP + H(+) = P(1),P(4)-bis(5'-adenosyl) tetraphosphate + diphosphate. In terms of biological role, catalyzes the ATP-dependent ligation of glycine to the 3'-end of its cognate tRNA, via the formation of an aminoacyl-adenylate intermediate (Gly-AMP). Also produces diadenosine tetraphosphate (Ap4A), a universal pleiotropic signaling molecule needed for cell regulation pathways, by direct condensation of 2 ATPs. Thereby, may play a special role in Ap4A homeostasis. The chain is Putative glycine--tRNA ligase (grs1) from Schizosaccharomyces pombe (strain 972 / ATCC 24843) (Fission yeast).